The primary structure comprises 214 residues: Uridine kinase (214 aa).

15–22 (GASASGKS) provides a ligand contact to ATP.

The protein belongs to the uridine kinase family.

It is found in the cytoplasm. It carries out the reaction uridine + ATP = UMP + ADP + H(+). The enzyme catalyses cytidine + ATP = CMP + ADP + H(+). It participates in pyrimidine metabolism; CTP biosynthesis via salvage pathway; CTP from cytidine: step 1/3. It functions in the pathway pyrimidine metabolism; UMP biosynthesis via salvage pathway; UMP from uridine: step 1/1. The sequence is that of Uridine kinase from Aeromonas hydrophila subsp. hydrophila (strain ATCC 7966 / DSM 30187 / BCRC 13018 / CCUG 14551 / JCM 1027 / KCTC 2358 / NCIMB 9240 / NCTC 8049).